Consider the following 163-residue polypeptide: Large ribosomal subunit protein uL15 (163 aa).

It belongs to the universal ribosomal protein uL15 family. In terms of assembly, part of the 50S ribosomal subunit.

Functionally, binds to the 23S rRNA. The chain is Large ribosomal subunit protein uL15 from Orientia tsutsugamushi (strain Boryong) (Rickettsia tsutsugamushi).